The following is a 136-amino-acid chain: Small ribosomal subunit protein uS8 (136 aa).

Belongs to the universal ribosomal protein uS8 family. In terms of assembly, part of the 30S ribosomal subunit. Contacts proteins S5 and S12.

One of the primary rRNA binding proteins, it binds directly to 16S rRNA central domain where it helps coordinate assembly of the platform of the 30S subunit. This is Small ribosomal subunit protein uS8 from Frankia alni (strain DSM 45986 / CECT 9034 / ACN14a).